Consider the following 344-residue polypeptide: L-rhamnose-proton symporter (344 aa).

10 helical membrane-spanning segments follow: residues 4–24 (AITM…CFYA), 38–58 (WSVG…ALLL), 68–88 (FSLS…IGNI), 101–121 (MGIG…TPII), 137–157 (TLLG…AGQL), 175–195 (LVLA…MNAA), 214–234 (LPSY…FCFI), 259–279 (VLLS…YAWG), 290–310 (ISWM…GLVL), and 323–343 (VLSL…IGMA).

The protein belongs to the L-rhamnose transporter (TC 2.A.7.6) family.

It localises to the cell inner membrane. The enzyme catalyses L-rhamnopyranose(in) + H(+)(in) = L-rhamnopyranose(out) + H(+)(out). Its function is as follows. Uptake of L-rhamnose across the cytoplasmic membrane with the concomitant transport of protons into the cell (symport system). The protein is L-rhamnose-proton symporter of Shigella sonnei (strain Ss046).